The following is a 121-amino-acid chain: MVRATGSVASRRRRKRILKQAKGFWGDRKGHIRQSRSSVMRAMAFNYMHRKDRKGDFRSLWIARLNVASRINGLSYSRLINGLKCAGIELNRKMLSEMAIHNPQGFAEVANQAKKALEATV.

This sequence belongs to the bacterial ribosomal protein bL20 family.

In terms of biological role, binds directly to 23S ribosomal RNA and is necessary for the in vitro assembly process of the 50S ribosomal subunit. It is not involved in the protein synthesizing functions of that subunit. This is Large ribosomal subunit protein bL20 from Chlamydia felis (strain Fe/C-56) (Chlamydophila felis).